Consider the following 361-residue polypeptide: MSDAIRPQPGILDIALYEGGKSHVAGIQNALKLSSNENPFGPSPKAKEAFLRSVHTLHRYPSTDHAGLRHAIAEVHGLDPARVICGVGSDEIITFLCQAYAGPHTDVVFTEHGFLMYRISALAVGANPVEVPERERTTDVDAILAACTPHTRLVFLANPNNPTGTMIGQADLARLAAGLPAQAILVLDGAYAEYVPGYDAGLALIEERGNVVMTRTFSKIYGLGGLRVGWGYGPKAIIDVLNRIRGPFNLSTTQLETAEAAVRDQDHVARCRADNARWRIWLAEALAEIGVPSDTSMANFILARFSDTEEAEACDLHLQTQGLIVRRVAGYKLPHCLRITIGDEASCRRVAHAIGQFKRMR.

The residue at position 219 (Lys-219) is an N6-(pyridoxal phosphate)lysine.

The protein belongs to the class-II pyridoxal-phosphate-dependent aminotransferase family. Histidinol-phosphate aminotransferase subfamily. As to quaternary structure, homodimer. It depends on pyridoxal 5'-phosphate as a cofactor.

It carries out the reaction L-histidinol phosphate + 2-oxoglutarate = 3-(imidazol-4-yl)-2-oxopropyl phosphate + L-glutamate. It functions in the pathway amino-acid biosynthesis; L-histidine biosynthesis; L-histidine from 5-phospho-alpha-D-ribose 1-diphosphate: step 7/9. The sequence is that of Histidinol-phosphate aminotransferase from Cereibacter sphaeroides (strain ATCC 17023 / DSM 158 / JCM 6121 / CCUG 31486 / LMG 2827 / NBRC 12203 / NCIMB 8253 / ATH 2.4.1.) (Rhodobacter sphaeroides).